The primary structure comprises 419 residues: L-rhamnose isomerase (419 aa).

Mn(2+) is bound by residues His-262, Asp-294, and Asp-296.

Belongs to the rhamnose isomerase family. Homotetramer. It depends on Mn(2+) as a cofactor.

It is found in the cytoplasm. It catalyses the reaction L-rhamnopyranose = L-rhamnulose. It functions in the pathway carbohydrate degradation; L-rhamnose degradation; glycerone phosphate from L-rhamnose: step 1/3. Catalyzes the interconversion of L-rhamnose and L-rhamnulose. In Salmonella enteritidis PT4 (strain P125109), this protein is L-rhamnose isomerase.